A 123-amino-acid polypeptide reads, in one-letter code: Large ribosomal subunit protein uL14c (123 aa).

Belongs to the universal ribosomal protein uL14 family. Part of the 50S ribosomal subunit. Interacts with IOJAP.

It is found in the plastid. Its subcellular location is the chloroplast. Functionally, binds to 23S rRNA. This Zea mays (Maize) protein is Large ribosomal subunit protein uL14c.